The sequence spans 100 residues: NAD(P)H-quinone oxidoreductase subunit 4L, chloroplastic (100 aa).

3 consecutive transmembrane segments (helical) span residues 1–21, 29–49, and 63–83; these read MIENALILGAYLFCIGFYGLI, ALMCLELIFNAVNINFVTFSN, and ISVIAIAAAEAAIGLSIILII.

The protein belongs to the complex I subunit 4L family. In terms of assembly, NDH is composed of at least 16 different subunits, 5 of which are encoded in the nucleus.

It is found in the plastid. It localises to the chloroplast thylakoid membrane. The catalysed reaction is a plastoquinone + NADH + (n+1) H(+)(in) = a plastoquinol + NAD(+) + n H(+)(out). It carries out the reaction a plastoquinone + NADPH + (n+1) H(+)(in) = a plastoquinol + NADP(+) + n H(+)(out). Functionally, NDH shuttles electrons from NAD(P)H:plastoquinone, via FMN and iron-sulfur (Fe-S) centers, to quinones in the photosynthetic chain and possibly in a chloroplast respiratory chain. The immediate electron acceptor for the enzyme in this species is believed to be plastoquinone. Couples the redox reaction to proton translocation, and thus conserves the redox energy in a proton gradient. This chain is NAD(P)H-quinone oxidoreductase subunit 4L, chloroplastic, found in Angiopteris evecta (Mule's foot fern).